The chain runs to 697 residues: Phosphatase and actin regulator 4-B (697 aa).

Residues 42–67 (EVLERKISMRKPREELVKRGLIVDVP) form an RPEL 1 repeat. 2 disordered regions span residues 63 to 381 (IVDV…LTLA) and 450 to 569 (LKVP…SKDE). A compositionally biased stretch (basic and acidic residues) spans 189–202 (HVPEKTSEKYRPKS). 2 stretches are compositionally biased toward pro residues: residues 317-326 (PSPPLPPKRA) and 370-380 (APNPPVPPLTL). Acidic residues-rich tracts occupy residues 454 to 469 (DDDD…DESL), 501 to 514 (QEED…DTDS), and 522 to 532 (EEDEDEEEEET). RPEL repeat units lie at residues 579–604 (TQLN…QKNE) and 616–641 (RRLT…RFNE).

This sequence belongs to the phosphatase and actin regulator family. Binds ppp1ca and actin.

It localises to the cytoplasm. The protein resides in the cell projection. It is found in the lamellipodium. Regulator of protein phosphatase 1 (PP1) required for neural tube and optic fissure closure, and enteric neural crest cell (ENCCs) migration during development. Acts as an activator of PP1. During neural tube closure, localizes to the ventral neural tube and activates PP1, leading to down-regulate cell proliferation within cranial neural tissue and the neural retina. Also acts as a regulator of migration of enteric neural crest cells (ENCCs) by activating PP1, leading to repression of the integrin signaling through the rho/rock pathway. This Xenopus laevis (African clawed frog) protein is Phosphatase and actin regulator 4-B (phactr4-b).